Reading from the N-terminus, the 458-residue chain is tRNA-2-methylthio-N(6)-dimethylallyladenosine synthase (458 aa).

The MTTase N-terminal domain maps to 15-134 (KKVFIKTYGC…LPELLQQAQQ (120 aa)). Cys-24, Cys-60, Cys-97, Cys-175, Cys-179, and Cys-182 together coordinate [4Fe-4S] cluster. Positions 161 to 393 (QKRGVSAFLT…QALLLDQQHR (233 aa)) constitute a Radical SAM core domain. The TRAM domain occupies 396–457 (RSKIGQTTDV…SNSFVGEKAN (62 aa)).

It belongs to the methylthiotransferase family. MiaB subfamily. As to quaternary structure, monomer. The cofactor is [4Fe-4S] cluster.

It localises to the cytoplasm. The catalysed reaction is N(6)-dimethylallyladenosine(37) in tRNA + (sulfur carrier)-SH + AH2 + 2 S-adenosyl-L-methionine = 2-methylsulfanyl-N(6)-dimethylallyladenosine(37) in tRNA + (sulfur carrier)-H + 5'-deoxyadenosine + L-methionine + A + S-adenosyl-L-homocysteine + 2 H(+). Its function is as follows. Catalyzes the methylthiolation of N6-(dimethylallyl)adenosine (i(6)A), leading to the formation of 2-methylthio-N6-(dimethylallyl)adenosine (ms(2)i(6)A) at position 37 in tRNAs that read codons beginning with uridine. In Bartonella bacilliformis (strain ATCC 35685 / KC583 / Herrer 020/F12,63), this protein is tRNA-2-methylthio-N(6)-dimethylallyladenosine synthase.